Consider the following 224-residue polypeptide: UPF0758 protein lin1584 (224 aa).

Residues 102-224 (VIRCPEDAVK…YISLKEKGYF (123 aa)) enclose the MPN domain. Residues histidine 173, histidine 175, and aspartate 186 each coordinate Zn(2+). A JAMM motif motif is present at residues 173-186 (HNHPSGDPAPSSED).

It belongs to the UPF0758 family.

The chain is UPF0758 protein lin1584 from Listeria innocua serovar 6a (strain ATCC BAA-680 / CLIP 11262).